The chain runs to 367 residues: Leucine dehydrogenase (367 aa).

Lys80 is a catalytic residue. Gly180–Tyr186 is an NAD(+) binding site.

Belongs to the Glu/Leu/Phe/Val dehydrogenases family. In terms of assembly, homohexamer.

It carries out the reaction L-leucine + NAD(+) + H2O = 4-methyl-2-oxopentanoate + NH4(+) + NADH + H(+). The protein operates within amino-acid degradation; L-leucine degradation; 4-methyl-2-oxopentanoate from L-leucine (dehydrogenase route): step 1/1. Its function is as follows. Catalyzes the reversible deamination of L-leucine to 4-methyl-2-oxopentanoate. The chain is Leucine dehydrogenase (ldh) from Geobacillus stearothermophilus (Bacillus stearothermophilus).